Reading from the N-terminus, the 570-residue chain is piRNA biogenesis protein EXD1 (570 aa).

One can recognise a 3'-5' exonuclease domain in the interval 135-307 (YTVIDQFQQK…LPPSLLKILA (173 aa)). 2 stretches are compositionally biased toward basic and acidic residues: residues 433 to 442 (DEKFLDKESK) and 453 to 465 (PRKEGEAHKDSKN). The disordered stretch occupies residues 433–485 (DEKFLDKESKQTTAKSQIVPPRKEGEAHKDSKNKPGCWESAGPEDPRAQKAHA).

The protein belongs to the EXD1 family. In terms of assembly, homodimer. Component of the PET complex, at least composed of EXD1, PIWIL2, TDRD12 and piRNAs.

The protein localises to the cytoplasm. Its function is as follows. RNA-binding component of the PET complex, a multiprotein complex required for the processing of piRNAs during spermatogenesis. The piRNA metabolic process mediates the repression of transposable elements during meiosis by forming complexes composed of piRNAs and Piwi proteins and governs the methylation and subsequent repression of transposable elements, preventing their mobilization, which is essential for the germline integrity. The PET complex is required during the secondary piRNAs metabolic process for the PIWIL2 slicing-triggered loading of PIWIL4 piRNAs. In the PET complex, EXD1 probably acts as an RNA adapter. EXD1 is an inactive exonuclease. This is piRNA biogenesis protein EXD1 (Exd1) from Mus musculus (Mouse).